The chain runs to 251 residues: CDP-diacylglycerol pyrophosphatase (251 aa).

Residues 4 to 24 form a helical membrane-spanning segment; the sequence is AGLLFLVMIVIAVVAAGIGYW.

It belongs to the Cdh family.

It localises to the cell inner membrane. The catalysed reaction is a CDP-1,2-diacyl-sn-glycerol + H2O = a 1,2-diacyl-sn-glycero-3-phosphate + CMP + 2 H(+). Its pathway is phospholipid metabolism; CDP-diacylglycerol degradation; phosphatidate from CDP-diacylglycerol: step 1/1. In Escherichia coli O9:H4 (strain HS), this protein is CDP-diacylglycerol pyrophosphatase.